We begin with the raw amino-acid sequence, 255 residues long: Probable UDP-N-acetylglucosamine pyrophosphorylase (255 aa).

The enzyme catalyses N-acetyl-alpha-D-glucosamine 1-phosphate + UTP + H(+) = UDP-N-acetyl-alpha-D-glucosamine + diphosphate. It participates in nucleotide-sugar biosynthesis; UDP-N-acetyl-alpha-D-glucosamine biosynthesis; UDP-N-acetyl-alpha-D-glucosamine from N-acetyl-alpha-D-glucosamine 1-phosphate: step 1/1. The chain is Probable UDP-N-acetylglucosamine pyrophosphorylase from Acanthamoeba polyphaga (Amoeba).